A 338-amino-acid chain; its full sequence is Anthocyanidin reductase ((2S)-flavan-3-ol-forming) (338 aa).

NADP(+) is bound by residues 18–21 (TGFV), lysine 48, 87–90 (VATP), and tyrosine 168.

This sequence belongs to the NAD(P)-dependent epimerase/dehydratase family. Dihydroflavonol-4-reductase subfamily.

It carries out the reaction a (2S,3R)-flavan-3-ol + 2 NADP(+) = an anthocyanidin with a 3-hydroxy group + 2 NADPH + 2 H(+). It catalyses the reaction a (2S,3S)-flavan-3-ol + 2 NADP(+) = an anthocyanidin with a 3-hydroxy group + 2 NADPH + 2 H(+). The protein operates within secondary metabolite biosynthesis; flavonoid biosynthesis. Produces the terminal flavan-3-ol monomers required for the formation of proanthocyanidins or condensed tannins in leaves and flowers, as well as in the skin and seeds of developing berries. Behaves as a reductase and as a C-3 epimerase. Catalyzes the double reduction of anthocyanidins, producing a mixture of (2S,3S)- and (2S,3R)-flavan-3-ols. The enzyme catalyzes sequential hydride transfers to C-2 and C-4, respectively and epimerization at C-3 is achieved by tautomerization that occurs between the two hydride transfers. Converts cyanidin, pelargonidin and delphinidin into catechin and epicatechin, afzelechin and epiafzelechin, and gallocatechin and epigallocatechin respectively. In Vitis vinifera (Grape), this protein is Anthocyanidin reductase ((2S)-flavan-3-ol-forming).